Reading from the N-terminus, the 229-residue chain is GTP cyclohydrolase 1 (229 aa).

The interval 1–21 (MTLAKPGSGSQSRMDDKAHFK) is disordered. Positions 116, 119, and 187 each coordinate Zn(2+).

Belongs to the GTP cyclohydrolase I family. As to quaternary structure, toroid-shaped homodecamer, composed of two pentamers of five dimers.

The catalysed reaction is GTP + H2O = 7,8-dihydroneopterin 3'-triphosphate + formate + H(+). The protein operates within cofactor biosynthesis; 7,8-dihydroneopterin triphosphate biosynthesis; 7,8-dihydroneopterin triphosphate from GTP: step 1/1. This Synechococcus sp. (strain JA-2-3B'a(2-13)) (Cyanobacteria bacterium Yellowstone B-Prime) protein is GTP cyclohydrolase 1.